The sequence spans 62 residues: Conotoxin Pn-014 (62 aa).

The signal sequence occupies residues 1-22 (MRCLPVFVILLLLIASAPSVDA). Positions 23-48 (RPKTKDDIPLVSFQDHAKRILQTFES) are excised as a propeptide. Trp61 carries the tryptophan amide modification.

Belongs to the conotoxin T superfamily. Post-translationally, contains 2 disulfide bonds that can be either 'C1-C3, C2-C4' or 'C1-C4, C2-C3', since these disulfide connectivities have been observed for conotoxins with cysteine framework V (for examples, see AC P0DQQ7 and AC P81755). Expressed by the venom duct.

Its subcellular location is the secreted. The sequence is that of Conotoxin Pn-014 from Conus pennaceus (Feathered cone).